A 193-amino-acid chain; its full sequence is MAAIRKKLVIVGDGACGKTCLLIVFSKDQFPEVYVPTVFENYVADIEVDSKQVELALWDTAGQEDYDRLRPLSYPDTDVILMCFSIDSPDSLENIPEKWTPEVKHFCPNVPIILVGNKKDLRNDEHTRRELQKMKQEPVKPEEGRDMANRINAFGYLECSAKTKEGVREVFEMATRAALQAKKRGKKNACALL.

GTP is bound by residues G12–T19, F30–T37, D59–Q63, N117–D120, and S160–K162. Residue Y34 is glycosylated ((Microbial infection) O-linked (GlcNAc) tyrosine; by Yersinia Afp18). C190 carries the cysteine methyl ester modification. Residue C190 is the site of S-geranylgeranyl cysteine attachment. Residues A191–L193 constitute a propeptide, removed in mature form.

This sequence belongs to the small GTPase superfamily. Rho family. In terms of processing, (Microbial infection) Glycosylated at Tyr-34 by Yersinia ruckeri toxin Afp18. Mono-O-GlcNAcylation by Afp18 inhibits RhoA activation by guanine nucleotide exchange factors and blocks RhoA signaling.

It localises to the cell membrane. Functionally, regulates a signal transduction pathway linking plasma membrane receptors to the assembly of focal adhesions and actin stress fibers. The chain is Rho-related GTP-binding protein RhoA-A from Danio rerio (Zebrafish).